Reading from the N-terminus, the 470-residue chain is Light-independent protochlorophyllide reductase subunit N (470 aa).

[4Fe-4S] cluster contacts are provided by C23, C48, and C108.

The protein belongs to the BchN/ChlN family. In terms of assembly, protochlorophyllide reductase is composed of three subunits; ChlL, ChlN and ChlB. Forms a heterotetramer of two ChlB and two ChlN subunits. It depends on [4Fe-4S] cluster as a cofactor.

It is found in the plastid. It localises to the chloroplast. The enzyme catalyses chlorophyllide a + oxidized 2[4Fe-4S]-[ferredoxin] + 2 ADP + 2 phosphate = protochlorophyllide a + reduced 2[4Fe-4S]-[ferredoxin] + 2 ATP + 2 H2O. It functions in the pathway porphyrin-containing compound metabolism; chlorophyll biosynthesis (light-independent). Functionally, component of the dark-operative protochlorophyllide reductase (DPOR) that uses Mg-ATP and reduced ferredoxin to reduce ring D of protochlorophyllide (Pchlide) to form chlorophyllide a (Chlide). This reaction is light-independent. The NB-protein (ChlN-ChlB) is the catalytic component of the complex. The sequence is that of Light-independent protochlorophyllide reductase subunit N from Zygnema circumcarinatum (Green alga).